The sequence spans 169 residues: MYFSTQIVNNKEKIMDTIFCNKGCCSLQTIKKKKPKVCDPNERYPFEKRKAGVFVECGSKFLLVQSYNDCWGIPKGHMEAYDHSPKTCAERELKEETGLEVKLTDAHLFRILLDNYYIYKISIPSVDQVDLSALPQLDSTGIGWVDMECAFDLNLTVLTQKILMALSCN.

A Nudix hydrolase domain is found at 46–169; that stretch reads FEKRKAGVFV…QKILMALSCN (124 aa). Positions 76–98 match the Nudix box motif; that stretch reads GHMEAYDHSPKTCAERELKEETG. Glutamate 92, glutamate 96, and aspartate 138 together coordinate Mg(2+).

The protein belongs to the Nudix hydrolase family. The cofactor is Mg(2+). Mn(2+) serves as cofactor.

The protein is Putative hydrolase 111R of Aedes vexans (Inland floodwater mosquito).